Here is a 150-residue protein sequence, read N- to C-terminus: UPF0178 protein Bcep18194_A4809 (150 aa).

It belongs to the UPF0178 family.

The chain is UPF0178 protein Bcep18194_A4809 from Burkholderia lata (strain ATCC 17760 / DSM 23089 / LMG 22485 / NCIMB 9086 / R18194 / 383).